The following is a 195-amino-acid chain: Pyruvoyl-dependent arginine decarboxylase AaxB (195 aa).

S53 bears the Pyruvic acid (Ser) mark.

It belongs to the pyruvoyl-dependent arginine decarboxylase family. In terms of assembly, trimer of an alpha-beta dimer. Pyruvate serves as cofactor.

The protein resides in the cytoplasm. The enzyme catalyses L-arginine + H(+) = agmatine + CO2. Its function is as follows. Part of the AaxABC system, catalyzes the decarboxylation of L-arginine. The arginine uptake by the bacterium in the macrophage may be a virulence factor against the host innate immune response. This Chlamydia trachomatis serovar L2 (strain ATCC VR-902B / DSM 19102 / 434/Bu) protein is Pyruvoyl-dependent arginine decarboxylase AaxB (aaxB).